We begin with the raw amino-acid sequence, 230 residues long: Large ribosomal subunit protein uL4 (230 aa).

The segment at 51–105 (RAAARQGTHSTKTRGDVSGGGRKPYRQKGTGRARQGSMRAPQFTGGGIVHGPKLR) is disordered.

It belongs to the universal ribosomal protein uL4 family. Part of the 50S ribosomal subunit.

In terms of biological role, one of the primary rRNA binding proteins, this protein initially binds near the 5'-end of the 23S rRNA. It is important during the early stages of 50S assembly. It makes multiple contacts with different domains of the 23S rRNA in the assembled 50S subunit and ribosome. Its function is as follows. Forms part of the polypeptide exit tunnel. This chain is Large ribosomal subunit protein uL4, found in Mycobacterium leprae (strain Br4923).